The primary structure comprises 614 residues: Probable ATP-dependent RNA helicase DDX5 (614 aa).

The segment covering methionine 1–glycine 15 has biased composition (basic and acidic residues). The interval methionine 1 to glutamate 39 is disordered. A Phosphoserine modification is found at serine 24. Lysine 32 is modified (N6-acetyllysine; alternate). Residue lysine 32 forms a Glycyl lysine isopeptide (Lys-Gly) (interchain with G-Cter in SUMO2); alternate linkage. Lysine 33 and lysine 40 each carry N6-acetyllysine. Lysine 45 is covalently cross-linked (Glycyl lysine isopeptide (Lys-Gly) (interchain with G-Cter in SUMO2)). A Glycyl lysine isopeptide (Lys-Gly) (interchain with G-Cter in SUMO2); alternate cross-link involves residue lysine 53. A Glycyl lysine isopeptide (Lys-Gly) (interchain with G-Cter in SUMO); alternate cross-link involves residue lysine 53. A Glycyl lysine isopeptide (Lys-Gly) (interchain with G-Cter in SUMO1); alternate cross-link involves residue lysine 53. The Q motif signature appears at leucine 94–alanine 122. ATP-binding positions include phenylalanine 114 to glutamate 116, glutamine 121, and alanine 138 to threonine 145. The region spanning tryptophan 125 to isoleucine 300 is the Helicase ATP-binding domain. Residue lysine 236 is modified to N6-acetyllysine. The DEAD box motif lies at aspartate 248–aspartate 251. Tyrosine 297 bears the Phosphotyrosine mark. The 148-residue stretch at lysine 328–valine 475 folds into the Helicase C-terminal domain. Glycyl lysine isopeptide (Lys-Gly) (interchain with G-Cter in SUMO2) cross-links involve residues lysine 340, lysine 343, lysine 388, lysine 391, lysine 411, lysine 437, lysine 451, and lysine 470. The interval aspartate 477 to glycine 504 is disordered. A transactivation domain region spans residues aspartate 477–glutamine 614. Serine 480 is modified (phosphoserine). Over residues glycine 488–serine 498 the composition is skewed to basic and acidic residues. Residue serine 520 is modified to Phosphoserine. A Glycyl lysine isopeptide (Lys-Gly) (interchain with G-Cter in SUMO2) cross-link involves residue lysine 523.

Belongs to the DEAD box helicase family. DDX5/DBP2 subfamily. As to quaternary structure, identified in the spliceosome C complex. Component of a ribonucleoprotein complex containing mRNAs and RNA-binding proteins including DDX5, HNRNPH2 and SRSF1 as well as splicing regulator ARVCF. Interacts with RBM4; the interaction occurs in an RNA-independent manner. Interacts with AGO1 and AGO2. Interacts with ESR1, AR, EP300, CREBBP, POLR2A, TP53, RUNX2 and HDAC1. Self-associates. Interacts with DDX17. Interacts with BRDT. The large PER complex involved in the repression of transcriptional termination is composed of at least PER2, CDK9, DDX5, DHX9, NCBP1 and POLR2A (active). Interacts with DHX36; this interaction occurs in a RNA-dependent manner. Interacts with NUPR1. Interacts with ERCC6. Interacts with DDX3X in the cytoplasm; this interaction may be more efficient when both proteins are unphosphorylated. In terms of processing, arg-502 is dimethylated, probably to asymmetric dimethylarginine. Sumoylated; sumoylation, promoted by PIAS1, promotes interaction with HDAC1 and transcriptional repression activity. Sumoylation also significantly increases stability, and reduces polyubiquitination. Post-translationally, polyubiquitinated, leading to proteasomal degradation. In terms of processing, weakly phosphorylated in the G1/S phase of the cell cycle and much more at G2/M, especially at Thr and Tyr residues.

It is found in the nucleus. The protein localises to the nucleolus. Its subcellular location is the nucleus speckle. The protein resides in the cytoplasm. The catalysed reaction is ATP + H2O = ADP + phosphate + H(+). In terms of biological role, involved in the alternative regulation of pre-mRNA splicing; its RNA helicase activity is necessary for increasing tau exon 10 inclusion and occurs in a RBM4-dependent manner. Binds to the tau pre-mRNA in the stem-loop region downstream of exon 10. The rate of ATP hydrolysis is highly stimulated by single-stranded RNA. Involved in transcriptional regulation; the function is independent of the RNA helicase activity. Transcriptional coactivator for androgen receptor AR but probably not ESR1. Synergizes with DDX17 and SRA1 RNA to activate MYOD1 transcriptional activity and involved in skeletal muscle differentiation. Transcriptional coactivator for p53/TP53 and involved in p53/TP53 transcriptional response to DNA damage and p53/TP53-dependent apoptosis. Transcriptional coactivator for RUNX2 and involved in regulation of osteoblast differentiation. Acts as a transcriptional repressor in a promoter-specific manner; the function probably involves association with histone deacetylases, such as HDAC1. As component of a large PER complex is involved in the inhibition of 3' transcriptional termination of circadian target genes such as PER1 and NR1D1 and the control of the circadian rhythms. This Homo sapiens (Human) protein is Probable ATP-dependent RNA helicase DDX5 (DDX5).